The sequence spans 518 residues: MRKINVFDTTLRDGEQSPGVNLNSREKLAIAKQLERLGVDIIEAGFPASSRGDFLAVQEIARTIKNCSVTGLARSVKGDIDAAWEALKDGVSPRIHIFIATSDIHLKHKLKMTREEVKEKAVEMVKYAKERFPIVQWSAEDACRTELPFLAEIVEEVIDAGASVINLPDTVGYLTPDEYGNIFKYMKEHVPNISRVKLSAHCHDDLGMAVANSLSAIENGADQIECAINGIGERAGNAALEEIAVALHVRNDAHQADSSLNLHELKRTSDLVSKLTGMAVPRNKAIVGDNAFAHESGIHQDGFLKEKSTYEIISPELVGVTADALVLGKHSGRHAFKDRLNTLGFQFDSDEINKYFTMFKELTEKKKEITDDDLISLILEEKVTDKKIGYEFLSLQVHYGTSQVPTATVSLKNQENEQLMQEAATGAGSVEAVYNTLGRCIDKNIELTDYRIQSNRKGEDALAQVFVRVTVNGKESSGRGIAQDVLEASAKAYLNAVNRQLVLDCNLDGLKRQTAVGS.

The Pyruvate carboxyltransferase domain occupies 4–266 (INVFDTTLRD…DSSLNLHELK (263 aa)). The Mn(2+) site is built by aspartate 13, histidine 201, histidine 203, and asparagine 237. The interval 391–518 (EFLSLQVHYG…GLKRQTAVGS (128 aa)) is regulatory domain.

It belongs to the alpha-IPM synthase/homocitrate synthase family. LeuA type 1 subfamily. As to quaternary structure, homodimer. Mn(2+) serves as cofactor.

It localises to the cytoplasm. It carries out the reaction 3-methyl-2-oxobutanoate + acetyl-CoA + H2O = (2S)-2-isopropylmalate + CoA + H(+). It functions in the pathway amino-acid biosynthesis; L-leucine biosynthesis; L-leucine from 3-methyl-2-oxobutanoate: step 1/4. In terms of biological role, catalyzes the condensation of the acetyl group of acetyl-CoA with 3-methyl-2-oxobutanoate (2-ketoisovalerate) to form 3-carboxy-3-hydroxy-4-methylpentanoate (2-isopropylmalate). The polypeptide is 2-isopropylmalate synthase (Bacillus velezensis (strain DSM 23117 / BGSC 10A6 / LMG 26770 / FZB42) (Bacillus amyloliquefaciens subsp. plantarum)).